Here is a 100-residue protein sequence, read N- to C-terminus: Small ribosomal subunit protein uS14c (100 aa).

Belongs to the universal ribosomal protein uS14 family. As to quaternary structure, component of the chloroplast small ribosomal subunit (SSU). Mature 70S chloroplast ribosomes of higher plants consist of a small (30S) and a large (50S) subunit. The 30S small subunit contains 1 molecule of ribosomal RNA (16S rRNA) and 24 different proteins. The 50S large subunit contains 3 rRNA molecules (23S, 5S and 4.5S rRNA) and 33 different proteins.

Its subcellular location is the plastid. The protein localises to the chloroplast. Its function is as follows. Component of the chloroplast ribosome (chloro-ribosome), a dedicated translation machinery responsible for the synthesis of chloroplast genome-encoded proteins, including proteins of the transcription and translation machinery and components of the photosynthetic apparatus. In Spinacia oleracea (Spinach), this protein is Small ribosomal subunit protein uS14c.